The chain runs to 107 residues: Flagellar hook-basal body complex protein FliE (107 aa).

It belongs to the FliE family.

It localises to the bacterial flagellum basal body. This Cupriavidus pinatubonensis (strain JMP 134 / LMG 1197) (Cupriavidus necator (strain JMP 134)) protein is Flagellar hook-basal body complex protein FliE.